We begin with the raw amino-acid sequence, 568 residues long: MSIKLKQRFVPQLAAINYQFEEDFSKMLKTVDTSHIKEKTVVKGQVIEIKNDMIIVDVGLKNEGRIPKSEFLSLPEVGDVVEVFIEKIEGRNGRTILSREKAVKEELWGQLEIMCSKGEFVDGTIFGRVKGGFTVDLSGVVAFLPGSQVDVRPIKDPTSIMNIKQPFKILSMDKKLGNIVVSRRVILEESRSEARDEMLSKIKEGMILEGVVKNITDYGAFIDLGSVDGLLHLTDISWGRVNHPSEVLEFNQKVKVMVIKFDEKTKRISLGIKQLDSNPWDAIKEEFPVGKKMTGKVTNFADYGVFLELKDGLEGLVHSSEISWLKSNQNPRKMLTIGQEVEFIVLEVDTEKHRVSLSIKQCQENPLIKFAENNPIGTIIKAPIRNITDFGIFVVLGNNMDGMIHEGDISWEDNGTDLLKSYKKGDEIECKVLAINFEKEQVSLGIKQLSPNPYQKISDEYKKGTIVKAVVTEIKDDGLVVLLNNKVTGFIKRVELSDEKDEQKPEMFQVDEEIDAKVVSIEKSTGRVLLSVKAHKIAERQKTLKEYGSSDNTTNMGDILANVLEEKK.

6 S1 motif domains span residues Lys-39–Glu-100, Gly-118–Arg-184, Gly-205–Lys-273, Gly-290–Lys-360, Gly-377–Lys-447, and Gly-464–Lys-533.

The protein belongs to the bacterial ribosomal protein bS1 family.

Functionally, binds mRNA; thus facilitating recognition of the initiation point. It is needed to translate mRNA with a short Shine-Dalgarno (SD) purine-rich sequence. In Rickettsia typhi (strain ATCC VR-144 / Wilmington), this protein is Small ribosomal subunit protein bS1 (rpsA).